The chain runs to 362 residues: sn-glycerol-3-phosphate import ATP-binding protein UgpC (362 aa).

Residues 4-235 enclose the ABC transporter domain; that stretch reads LSFRNVKKTY…PASTFVAGFI (232 aa). Position 37–44 (37–44) interacts with ATP; that stretch reads GPSGCGKS.

Belongs to the ABC transporter superfamily. sn-glycerol-3-phosphate importer (TC 3.A.1.1.3) family. In terms of assembly, the complex is composed of two ATP-binding proteins (UgpC), two transmembrane proteins (UgpA and UgpE) and a solute-binding protein (UgpB).

It is found in the cell inner membrane. It carries out the reaction sn-glycerol 3-phosphate(out) + ATP + H2O = sn-glycerol 3-phosphate(in) + ADP + phosphate + H(+). Functionally, part of the ABC transporter complex UgpBAEC involved in sn-glycerol-3-phosphate (G3P) import. Responsible for energy coupling to the transport system. This Bordetella pertussis (strain Tohama I / ATCC BAA-589 / NCTC 13251) protein is sn-glycerol-3-phosphate import ATP-binding protein UgpC.